The sequence spans 330 residues: Ketol-acid reductoisomerase (NADP(+)) (330 aa).

In terms of domain architecture, KARI N-terminal Rossmann spans 1 to 181; it reads MNVYYEQDAD…GGAKAGVIET (181 aa). Residues 24-27, R47, S50, S52, and 82-85 each bind NADP(+); these read YGSQ and DQYQ. H107 is an active-site residue. G133 is a binding site for NADP(+). Residues 182–327 form the KARI C-terminal knotted domain; the sequence is TIKDETETDL…AKLRNMMSWL (146 aa). Mg(2+)-binding residues include D190, E194, E226, and E230. Position 251 (S251) interacts with substrate.

This sequence belongs to the ketol-acid reductoisomerase family. It depends on Mg(2+) as a cofactor.

It catalyses the reaction (2R)-2,3-dihydroxy-3-methylbutanoate + NADP(+) = (2S)-2-acetolactate + NADPH + H(+). It carries out the reaction (2R,3R)-2,3-dihydroxy-3-methylpentanoate + NADP(+) = (S)-2-ethyl-2-hydroxy-3-oxobutanoate + NADPH + H(+). It functions in the pathway amino-acid biosynthesis; L-isoleucine biosynthesis; L-isoleucine from 2-oxobutanoate: step 2/4. It participates in amino-acid biosynthesis; L-valine biosynthesis; L-valine from pyruvate: step 2/4. Its function is as follows. Involved in the biosynthesis of branched-chain amino acids (BCAA). Catalyzes an alkyl-migration followed by a ketol-acid reduction of (S)-2-acetolactate (S2AL) to yield (R)-2,3-dihydroxy-isovalerate. In the isomerase reaction, S2AL is rearranged via a Mg-dependent methyl migration to produce 3-hydroxy-3-methyl-2-ketobutyrate (HMKB). In the reductase reaction, this 2-ketoacid undergoes a metal-dependent reduction by NADPH to yield (R)-2,3-dihydroxy-isovalerate. The polypeptide is Ketol-acid reductoisomerase (NADP(+)) (Prosthecochloris aestuarii (strain DSM 271 / SK 413)).